A 390-amino-acid polypeptide reads, in one-letter code: 3-ketoacyl-CoA thiolase (390 aa).

Cysteine 95 acts as the Acyl-thioester intermediate in catalysis. Residues histidine 346 and cysteine 376 each act as proton acceptor in the active site.

This sequence belongs to the thiolase-like superfamily. Thiolase family. Heterotetramer of two alpha chains (FadB) and two beta chains (FadA).

Its subcellular location is the cytoplasm. The enzyme catalyses an acyl-CoA + acetyl-CoA = a 3-oxoacyl-CoA + CoA. The protein operates within lipid metabolism; fatty acid beta-oxidation. Its function is as follows. Catalyzes the final step of fatty acid oxidation in which acetyl-CoA is released and the CoA ester of a fatty acid two carbons shorter is formed. The polypeptide is 3-ketoacyl-CoA thiolase (Psychrobacter cryohalolentis (strain ATCC BAA-1226 / DSM 17306 / VKM B-2378 / K5)).